Here is a 475-residue protein sequence, read N- to C-terminus: Probable 5'-adenylylsulfate reductase 1, chloroplastic (475 aa).

The N-terminal 63 residues, 1-63, are a transit peptide targeting the chloroplast; it reads MASATASISS…AAEPARQPVS (63 aa). Positions 72-327 are reductase domain; the sequence is AAPVAEDAAA…KAKECGLHKG (256 aa). The region spanning 341–475 is the Thioredoxin domain; sequence HKAGGANGNG…SLLAFVNSLR (135 aa). Active-site nucleophile residues include Cys-393 and Cys-396. Cys-393 and Cys-396 are disulfide-bonded.

It belongs to the APS reductase family. [4Fe-4S] cluster serves as cofactor.

Its subcellular location is the plastid. It is found in the chloroplast. The enzyme catalyses glutathione disulfide + sulfite + AMP + 2 H(+) = adenosine 5'-phosphosulfate + 2 glutathione. In terms of biological role, reduces sulfate for Cys biosynthesis. In Oryza sativa subsp. japonica (Rice), this protein is Probable 5'-adenylylsulfate reductase 1, chloroplastic (APR1).